Reading from the N-terminus, the 341-residue chain is Myb-related transcription factor, partner of profilin (341 aa).

Residues 8–80 (VTRLRKPRFS…EVQKRWNDFK (73 aa)) enclose the Myb-like domain. 3 disordered regions span residues 84–103 (KEKLARVPHSTQSGTAEEAM), 180–210 (LPHLTPSPDPSECPSPPPPGSGTPLLTPSGV), and 309–341 (AEPPRSPSPPPPNKRKRFGYLSQRKRRGRWKNL). Residues 184 to 200 (TPSPDPSECPSPPPPGS) show a composition bias toward pro residues. Basic residues predominate over residues 321 to 341 (NKRKRFGYLSQRKRRGRWKNL).

It is found in the nucleus. Functionally, transcriptional repressor; DNA-binding protein that specifically recognizes the core sequence 5'-YAAC[GT]G-3'. The chain is Myb-related transcription factor, partner of profilin (mypop) from Xenopus laevis (African clawed frog).